Consider the following 339-residue polypeptide: Dihydroorotate dehydrogenase (quinone) (339 aa).

FMN contacts are provided by residues 62 to 66 (AGMDK) and threonine 86. Lysine 66 is a substrate binding site. Substrate is bound at residue 111-115 (NRMGF). Residues asparagine 139 and asparagine 172 each contribute to the FMN site. Asparagine 172 is a substrate binding site. Catalysis depends on serine 175, which acts as the Nucleophile. Asparagine 177 serves as a coordination point for substrate. Residues lysine 217 and threonine 245 each contribute to the FMN site. 246 to 247 (NT) lines the substrate pocket. Residues glycine 268, glycine 297, and 318-319 (YS) contribute to the FMN site.

It belongs to the dihydroorotate dehydrogenase family. Type 2 subfamily. In terms of assembly, monomer. FMN serves as cofactor.

The protein resides in the cell membrane. The catalysed reaction is (S)-dihydroorotate + a quinone = orotate + a quinol. The protein operates within pyrimidine metabolism; UMP biosynthesis via de novo pathway; orotate from (S)-dihydroorotate (quinone route): step 1/1. Catalyzes the conversion of dihydroorotate to orotate with quinone as electron acceptor. In Shewanella baltica (strain OS155 / ATCC BAA-1091), this protein is Dihydroorotate dehydrogenase (quinone).